Here is a 416-residue protein sequence, read N- to C-terminus: Isocitrate dehydrogenase [NADP] (416 aa).

Residues 77–79 and R84 each bind NADP(+); that span reads TIT. T79 provides a ligand contact to substrate. Substrate-binding positions include 96–102, R111, and R134; that span reads SPNGTIR. Residue D254 participates in Mn(2+) binding. K262 is an NADP(+) binding site. Residue D277 coordinates Mn(2+). NADP(+)-binding positions include 312 to 317 and N330; that span reads GTVTRH.

The protein belongs to the isocitrate and isopropylmalate dehydrogenases family. In terms of assembly, heterodimer. It depends on Mg(2+) as a cofactor. Mn(2+) serves as cofactor.

The protein localises to the cytoplasm. It carries out the reaction D-threo-isocitrate + NADP(+) = 2-oxoglutarate + CO2 + NADPH. Its function is as follows. May supply 2-oxoglutarate for amino acid biosynthesis and ammonia assimilation via the glutamine synthetase/glutamate synthase (GS/GOGAT) pathway. This chain is Isocitrate dehydrogenase [NADP] (ICDH-1), found in Solanum tuberosum (Potato).